Reading from the N-terminus, the 309-residue chain is Foldase protein PrsA 2 (309 aa).

Positions 1-20 (MKYRLIGVGASLVVAVMLTG) are cleaved as a signal peptide. Cysteine 21 is lipidated: N-palmitoyl cysteine. Cysteine 21 carries S-diacylglycerol cysteine lipidation. The region spanning 137–232 (MPMTTVQHIA…TADTKDKPTY (96 aa)) is the PpiC domain.

Belongs to the PrsA family.

Its subcellular location is the cell membrane. The catalysed reaction is [protein]-peptidylproline (omega=180) = [protein]-peptidylproline (omega=0). Its function is as follows. Plays a major role in protein secretion by helping the post-translocational extracellular folding of several secreted proteins. The chain is Foldase protein PrsA 2 (prsA2) from Lactiplantibacillus plantarum (strain ATCC BAA-793 / NCIMB 8826 / WCFS1) (Lactobacillus plantarum).